We begin with the raw amino-acid sequence, 204 residues long: Recombination protein RecR (204 aa).

The C4-type zinc finger occupies 61–76 (CARCNTFSETQICSTC). The 100-residue stretch at 84-183 (SLLCIVETPA…KVTRIARGIP (100 aa)) folds into the Toprim domain.

The protein belongs to the RecR family.

Functionally, may play a role in DNA repair. It seems to be involved in an RecBC-independent recombinational process of DNA repair. It may act with RecF and RecO. The sequence is that of Recombination protein RecR from Polynucleobacter asymbioticus (strain DSM 18221 / CIP 109841 / QLW-P1DMWA-1) (Polynucleobacter necessarius subsp. asymbioticus).